The chain runs to 252 residues: Phosphosulfolactate synthase (252 aa).

This sequence belongs to the phosphosulfolactate synthase family.

The catalysed reaction is (2R)-O-phospho-3-sulfolactate = phosphoenolpyruvate + sulfite + H(+). Functionally, catalyzes the addition of sulfite to phosphoenolpyruvate (PEP) to yield (2R)-phospho-3-sulfolactate (PSL). Is probably involved in the biosynthesis of L-sulfolactate, which is a major constituent of sporulating cells and mature spores. The chain is Phosphosulfolactate synthase (yitD) from Bacillus subtilis (strain 168).